The sequence spans 321 residues: Peroxidase 42 (321 aa).

A signal peptide spans 1 to 29 (MATSSGSCLIISLLVVVVAAALSASTASA). Gln30 is modified (pyrrolidone carboxylic acid). 4 disulfide bridges follow: Cys40–Cys118, Cys73–Cys78, Cys124–Cys315, and Cys202–Cys227. The active-site Proton acceptor is His71. Positions 72, 75, 77, 79, and 81 each coordinate Ca(2+). Residues Asn85 and Asn96 are each glycosylated (N-linked (GlcNAc...) asparagine). Residue Pro165 coordinates substrate. His195 is a binding site for heme b. Thr196 is a binding site for Ca(2+). An N-linked (GlcNAc...) asparagine glycan is attached at Asn211. 3 residues coordinate Ca(2+): Asp239, Thr242, and Gly247. N-linked (GlcNAc...) asparagine glycosylation occurs at Asn270.

It belongs to the peroxidase family. Classical plant (class III) peroxidase subfamily. Heme b serves as cofactor. It depends on Ca(2+) as a cofactor.

It is found in the secreted. The enzyme catalyses 2 a phenolic donor + H2O2 = 2 a phenolic radical donor + 2 H2O. Its function is as follows. Removal of H(2)O(2), oxidation of toxic reductants, biosynthesis and degradation of lignin, suberization, auxin catabolism, response to environmental stresses such as wounding, pathogen attack and oxidative stress. These functions might be dependent on each isozyme/isoform in each plant tissue. This Zea mays (Maize) protein is Peroxidase 42 (PER42).